A 224-amino-acid polypeptide reads, in one-letter code: UPF0758 protein VSAL_I0192 (224 aa).

An MPN domain is found at 102 to 224 (ALTSPEHTKR…IVSFAERGWI (123 aa)). 3 residues coordinate Zn(2+): H173, H175, and D186. The JAMM motif signature appears at 173–186 (HNHPSGVAEPSQAD).

The protein belongs to the UPF0758 family.

This chain is UPF0758 protein VSAL_I0192, found in Aliivibrio salmonicida (strain LFI1238) (Vibrio salmonicida (strain LFI1238)).